The sequence spans 21 residues: Hemocyanin subunit 1 (21 aa).

The protein belongs to the tyrosinase family. Hemocyanin subfamily. Hemolymph.

The protein resides in the secreted. The protein localises to the extracellular space. Functionally, hemocyanins are copper-containing oxygen carriers occurring freely dissolved in the hemolymph of many mollusks and arthropods. The polypeptide is Hemocyanin subunit 1 (Maja squinado (Mediterranean spider crab)).